We begin with the raw amino-acid sequence, 88 residues long: MEVSQSQLDLKIKYLKLKRINELNDKLRDELQRERITASNACLQLIAYTTSTRDYALPTLWGYPPADTNHFRDFQTQHADDATCCTIM.

A lipid anchor (S-palmitoyl cysteine) is attached at Cys-84. Cysteine methyl ester is present on Cys-85. The S-farnesyl cysteine moiety is linked to residue Cys-85. Positions 86–88 (TIM) are cleaved as a propeptide — removed in mature form.

It belongs to the G protein gamma family. G proteins are composed of 3 units, alpha, beta and gamma.

Its subcellular location is the membrane. In Candida glabrata (strain ATCC 2001 / BCRC 20586 / JCM 3761 / NBRC 0622 / NRRL Y-65 / CBS 138) (Yeast), this protein is Guanine nucleotide-binding protein subunit gamma.